Reading from the N-terminus, the 309-residue chain is Taste receptor type 2 member 8 (309 aa).

The Extracellular portion of the chain corresponds to 1–7 (MFSPADN). The chain crosses the membrane as a helical span at residues 8–28 (IFIILITGEFIIGILGNGYIG). Residues 29 to 50 (LVNWIDWIKKKKISTIDCILTN) lie on the Cytoplasmic side of the membrane. The chain crosses the membrane as a helical span at residues 51–71 (LVISRICLISVMVVNGIVIVL). The Extracellular portion of the chain corresponds to 72-82 (YPDVYTKTKLQ). Residues 83–103 (IVICTFWTFANYLNMWFTACL) traverse the membrane as a helical segment. The Cytoplasmic segment spans residues 104–131 (NVFYSLKVANSSHPLFLWLKRKIDMVVR). A helical transmembrane segment spans residues 132-152 (WILLGCFAISLLVSLIIATVL). Topologically, residues 153–184 (SHDYRFHAIAKHKRNVTEMFHVSKMPYFEPLT) are extracellular. N-linked (GlcNAc...) asparagine glycosylation is present at N167. A helical membrane pass occupies residues 185–205 (LFNLLAIVPFIVSLMSFFLLV). Over 206–239 (RSLWRHTKQIKLYATGGRDPSTEAHVRAIKTMTL) the chain is Cytoplasmic. A helical transmembrane segment spans residues 240 to 260 (LIFFFFLYYITSLLVXFSYLI). Topologically, residues 261-266 (TNYKLA) are extracellular. Residues 267 to 287 (MAFGEIVAILYPSGHSLILII) traverse the membrane as a helical segment. Over 288–309 (LNNKLRQASVRMLTCRKIACVT) the chain is Cytoplasmic.

The protein belongs to the G-protein coupled receptor T2R family.

The protein resides in the membrane. Its function is as follows. Receptor that may play a role in the perception of bitterness and is gustducin-linked. May play a role in sensing the chemical composition of the gastrointestinal content. The activity of this receptor may stimulate alpha gustducin, mediate PLC-beta-2 activation and lead to the gating of TRPM5. The protein is Taste receptor type 2 member 8 (TAS2R8) of Papio hamadryas (Hamadryas baboon).